The following is a 166-amino-acid chain: Cyclic pyranopterin monophosphate synthase (166 aa).

Substrate is bound by residues leucine 75 to histidine 77 and methionine 113 to glutamate 114. The active site involves aspartate 128.

It belongs to the MoaC family. Homohexamer; trimer of dimers.

The catalysed reaction is (8S)-3',8-cyclo-7,8-dihydroguanosine 5'-triphosphate = cyclic pyranopterin phosphate + diphosphate. The protein operates within cofactor biosynthesis; molybdopterin biosynthesis. Catalyzes the conversion of (8S)-3',8-cyclo-7,8-dihydroguanosine 5'-triphosphate to cyclic pyranopterin monophosphate (cPMP). The chain is Cyclic pyranopterin monophosphate synthase from Thermomicrobium roseum (strain ATCC 27502 / DSM 5159 / P-2).